A 304-amino-acid chain; its full sequence is Sperm microtubule inner protein 6 (304 aa).

Belongs to the SPMIP6 family. In terms of assembly, microtubule inner protein component of sperm flagellar doublet microtubules. Interacts with alpha-tubulin.

The protein resides in the cytoplasm. It localises to the cytoskeleton. Its subcellular location is the nucleus. It is found in the mitochondrion. The protein localises to the flagellum axoneme. May participate in intramanchette transport and midpiece formation of the sperm tail. May play a potential role in somatic cell proliferation. This Bos taurus (Bovine) protein is Sperm microtubule inner protein 6 (SPMIP6).